The following is a 315-amino-acid chain: Transcription antitermination protein NusB (315 aa).

The interval 296 to 315 (SANFDTKSAELNDADEKSQD) is disordered. Basic and acidic residues predominate over residues 302-315 (KSAELNDADEKSQD).

This sequence belongs to the NusB family.

Its function is as follows. Involved in transcription antitermination. Required for transcription of ribosomal RNA (rRNA) genes. Binds specifically to the boxA antiterminator sequence of the ribosomal RNA (rrn) operons. The chain is Transcription antitermination protein NusB from Psychrobacter cryohalolentis (strain ATCC BAA-1226 / DSM 17306 / VKM B-2378 / K5).